The sequence spans 842 residues: Alanine--tRNA ligase (842 aa).

Zn(2+)-binding residues include His-549, His-553, Cys-650, and His-654.

The protein belongs to the class-II aminoacyl-tRNA synthetase family. Zn(2+) is required as a cofactor.

It localises to the cytoplasm. The enzyme catalyses tRNA(Ala) + L-alanine + ATP = L-alanyl-tRNA(Ala) + AMP + diphosphate. Functionally, catalyzes the attachment of alanine to tRNA(Ala) in a two-step reaction: alanine is first activated by ATP to form Ala-AMP and then transferred to the acceptor end of tRNA(Ala). Also edits incorrectly charged Ser-tRNA(Ala) and Gly-tRNA(Ala) via its editing domain. In Campylobacter jejuni subsp. doylei (strain ATCC BAA-1458 / RM4099 / 269.97), this protein is Alanine--tRNA ligase.